The chain runs to 300 residues: 33 kDa chaperonin (300 aa).

2 disulfides stabilise this stretch: cysteine 235/cysteine 237 and cysteine 269/cysteine 272.

Belongs to the HSP33 family. Post-translationally, under oxidizing conditions two disulfide bonds are formed involving the reactive cysteines. Under reducing conditions zinc is bound to the reactive cysteines and the protein is inactive.

Its subcellular location is the cytoplasm. In terms of biological role, redox regulated molecular chaperone. Protects both thermally unfolding and oxidatively damaged proteins from irreversible aggregation. Plays an important role in the bacterial defense system toward oxidative stress. The protein is 33 kDa chaperonin of Pseudomonas syringae pv. tomato (strain ATCC BAA-871 / DC3000).